The following is a 177-amino-acid chain: MADVISSLQTQLKELDTKFAGNNVLNQLEQRTNLPKSYLVVGSTIFYLLLIFINVGGIGEILGNFAGFVIPAYYSILALKTTTTKDDTQLLTYWIVFSFLNVIEFWSKALLYIIPFYWFLKTIFLLYIALPQTGGATMIYNRFISPLTDKYILGPKKTDGVQQSVKEASRATGAATH.

Over Met-1–Pro-35 the chain is Cytoplasmic. The chain crosses the membrane as a helical span at residues Lys-36–Val-55. Residues Gly-56–Gly-57 are Lumenal-facing. A helical membrane pass occupies residues Ile-58–Ala-78. The Cytoplasmic portion of the chain corresponds to Leu-79–Thr-88. A helical membrane pass occupies residues Gln-89–Ile-103. At Glu-104–Lys-108 the chain is on the lumenal side. Residues Ala-109–Tyr-127 traverse the membrane as a helical segment. The Cytoplasmic portion of the chain corresponds to Ile-128 to His-177.

It belongs to the DP1 family. As to quaternary structure, oligomer.

It is found in the endoplasmic reticulum membrane. The protein resides in the golgi apparatus membrane. Functionally, required to generate and maintain the structure of the tubular endoplasmic reticulum network and the vacuole. Induces high curvature in membranes and causes membrane tubule formation. Involved in membrane/vesicle trafficking. The sequence is that of Protein YOP1 (YOP1) from Candida glabrata (strain ATCC 2001 / BCRC 20586 / JCM 3761 / NBRC 0622 / NRRL Y-65 / CBS 138) (Yeast).